The sequence spans 190 residues: dCTP deaminase, dUMP-forming (190 aa).

DCTP is bound by residues 101 to 106, Asp-119, 127 to 129, Gln-148, Tyr-162, and Gln-174; these read KSSLGR and TLE. Glu-129 functions as the Proton donor/acceptor in the catalytic mechanism. Residues 161-190 are disordered; sequence PYGSSGVGSKYQGQRGPTPSRSYQNFIRST. Positions 171–190 are enriched in polar residues; sequence YQGQRGPTPSRSYQNFIRST.

This sequence belongs to the dCTP deaminase family. As to quaternary structure, homotrimer.

The catalysed reaction is dCTP + 2 H2O = dUMP + NH4(+) + diphosphate. Its pathway is pyrimidine metabolism; dUMP biosynthesis; dUMP from dCTP: step 1/1. Its function is as follows. Bifunctional enzyme that catalyzes both the deamination of dCTP to dUTP and the hydrolysis of dUTP to dUMP without releasing the toxic dUTP intermediate. This Mycobacterium ulcerans (strain Agy99) protein is dCTP deaminase, dUMP-forming.